The sequence spans 761 residues: Isocyanide synthase xanB (761 aa).

Residues Leu-24–His-128 form a disordered region. Positions Glu-36 to Glu-48 are enriched in low complexity. Residues Thr-93–Asn-102 show a composition bias toward polar residues. The segment covering Phe-115–Pro-126 has biased composition (basic and acidic residues).

The protein belongs to the isocyanide synthase family.

Its pathway is secondary metabolite biosynthesis. Its function is as follows. Isocyanide synthase; part of the gene cluster that mediates the biosynthesis of the isocyanide xanthocillin and its derivatives. The first step of the pathway consists in the conversion of tyrosine into a vinyl-isonitrile intermediate by the isocyanide synthase xanB. Subsequent oxidative dimerization of this intermediate to form xanthocillin may involve the cytochrome P450 monooxygenase xanG, whose expression is coregulated with that of XanB. Xanthocillin can be further modified by the isonitrile hydratase-like protein xanA which introduces N-formyl groups and the methyltransferase xanE which introduces methyl groups, leading to the production of several derivatives including fumiformamide. Finally, fumiformamide can be subject to both oxidative and reductive cyclization to yield melanocins E and F, respectively. The chain is Isocyanide synthase xanB from Aspergillus fumigatus (strain ATCC MYA-4609 / CBS 101355 / FGSC A1100 / Af293) (Neosartorya fumigata).